The primary structure comprises 1362 residues: Insulin receptor (1362 aa).

The signal sequence occupies residues 1-37; it reads MGQGVLRGEGHPNNNPNSKVGWKSLVGIITIFMLILC. A leucine-rich region region spans residues 38-184; sequence DQSDGKICYS…DSVEDNYIEL (147 aa). A disulfide bond links C45 and C63. N-linked (GlcNAc...) asparagine glycans are attached at residues N53, N115, and N148. Intrachain disulfides connect C163/C192, C196/C219, C206/C225, C229/C238, C233/C244, C245/C253, C249/C262, C265/C274, C278/C290, C296/C321, C303/C311, C325/C338, C341/C345, and C349/C370. N332 is a glycosylation site (N-linked (GlcNAc...) asparagine). N-linked (GlcNAc...) asparagine glycosylation is found at N374, N434, and N455. An intrachain disulfide couples C472 to C505. Fibronectin type-III domains follow at residues 508 to 629 and 633 to 730; these read NLLT…TNET and VPLD…IQKE. 5 N-linked (GlcNAc...) asparagine glycosylation sites follow: N551, N627, N642, N660, and N707. 2 cysteine pairs are disulfide-bonded: C683-C896 and C822-C830. The segment at 694–714 is disordered; it reads WTPPTEIDENGNENQTEHTSV. Residues 705 to 714 show a composition bias toward polar residues; it reads NENQTEHTSV. Positions 741–749 are insulin-binding; that stretch reads ENYLHNEVF. The Extracellular portion of the chain corresponds to 759 to 951; the sequence is DLFGVANGTL…PDHPHSNIVK (193 aa). Residues N765 and N779 are each glycosylated (N-linked (GlcNAc...) asparagine). The region spanning 849 to 944 is the Fibronectin type-III 3 domain; sequence VVGPITYEYV…EQAYFQVPDH (96 aa). N-linked (GlcNAc...) asparagine glycosylation is found at N917 and N930. The helical transmembrane segment at 952–972 threads the bilayer; that stretch reads IITGPIIAVFLLLIVLVYCVV. The Cytoplasmic portion of the chain corresponds to 973-1362; that stretch reads QKKKDAEGPA…ILSLPRSSPS (390 aa). A Phosphotyrosine; by autocatalysis modification is found at Y993. Residues 1012 to 1287 enclose the Protein kinase domain; it reads INLLRELGQG…MLKDDLRPSF (276 aa). ATP-binding positions include S1022, K1046, and 1093-1099; that span reads ELMAHGD. D1148 acts as the Proton donor/acceptor in catalysis. ATP-binding positions include 1152–1153 and D1166; that span reads RN. Phosphotyrosine; by autocatalysis occurs at positions 1174, 1178, 1179, 1335, and 1341.

This sequence belongs to the protein kinase superfamily. Tyr protein kinase family. Insulin receptor subfamily. Tetramer of 2 alpha and 2 beta chains linked by disulfide bonds. The alpha chains contribute to the formation of the ligand-binding domain, while the beta chains carry the kinase domain. Autophosphorylated on tyrosine residues in response to insulin. In terms of tissue distribution, localized mainly to the envelope in oocytes. Localized to the animal hemisphere during early embryonic cleavage. Expressed during organogenesis in regions of ecto- and mesodermic origins. Expressed in the entire encephalon, the otic and optic vesicles, the gills, the somites and the pronephric tubules of the embryo. Also found in adult liver, muscle and regenerated forelimbs.

It is found in the cell membrane. It carries out the reaction L-tyrosyl-[protein] + ATP = O-phospho-L-tyrosyl-[protein] + ADP + H(+). With respect to regulation, autophosphorylation activates the kinase activity. Its function is as follows. Receptor tyrosine kinase which mediates actions of insulin. May be required for forelimb regeneration. The polypeptide is Insulin receptor (insr) (Xenopus laevis (African clawed frog)).